We begin with the raw amino-acid sequence, 213 residues long: Pyridoxine/pyridoxamine 5'-phosphate oxidase (213 aa).

Substrate is bound by residues 9–12 (RKSY) and K67. FMN is bound by residues 62–67 (RVVLIK), 77–78 (YT), R83, and K84. 3 residues coordinate substrate: Y124, R128, and S132. FMN contacts are provided by residues 141-142 (QS) and W185. 191–193 (RLH) is a binding site for substrate. R195 lines the FMN pocket.

It belongs to the pyridoxamine 5'-phosphate oxidase family. In terms of assembly, homodimer. FMN is required as a cofactor.

The enzyme catalyses pyridoxamine 5'-phosphate + O2 + H2O = pyridoxal 5'-phosphate + H2O2 + NH4(+). It carries out the reaction pyridoxine 5'-phosphate + O2 = pyridoxal 5'-phosphate + H2O2. It functions in the pathway cofactor metabolism; pyridoxal 5'-phosphate salvage; pyridoxal 5'-phosphate from pyridoxamine 5'-phosphate: step 1/1. It participates in cofactor metabolism; pyridoxal 5'-phosphate salvage; pyridoxal 5'-phosphate from pyridoxine 5'-phosphate: step 1/1. Its function is as follows. Catalyzes the oxidation of either pyridoxine 5'-phosphate (PNP) or pyridoxamine 5'-phosphate (PMP) into pyridoxal 5'-phosphate (PLP). This chain is Pyridoxine/pyridoxamine 5'-phosphate oxidase, found in Methylibium petroleiphilum (strain ATCC BAA-1232 / LMG 22953 / PM1).